Consider the following 197-residue polypeptide: Holliday junction branch migration complex subunit RuvA (197 aa).

The tract at residues 1–64 (MYEYIKGKYI…EDFIGVYGFL (64 aa)) is domain I. A domain II region spans residues 65–144 (TKDELSMFKL…DILEEDDEQI (80 aa)). A flexible linker region spans residues 145-149 (INKVT). The tract at residues 149–197 (TDDKKVLEAVAALVTLGYSEKEANKVINSCDKNNSLEQIIKEALKYLMK) is domain III.

It belongs to the RuvA family. Homotetramer. Forms an RuvA(8)-RuvB(12)-Holliday junction (HJ) complex. HJ DNA is sandwiched between 2 RuvA tetramers; dsDNA enters through RuvA and exits via RuvB. An RuvB hexamer assembles on each DNA strand where it exits the tetramer. Each RuvB hexamer is contacted by two RuvA subunits (via domain III) on 2 adjacent RuvB subunits; this complex drives branch migration. In the full resolvosome a probable DNA-RuvA(4)-RuvB(12)-RuvC(2) complex forms which resolves the HJ.

It localises to the cytoplasm. Its function is as follows. The RuvA-RuvB-RuvC complex processes Holliday junction (HJ) DNA during genetic recombination and DNA repair, while the RuvA-RuvB complex plays an important role in the rescue of blocked DNA replication forks via replication fork reversal (RFR). RuvA specifically binds to HJ cruciform DNA, conferring on it an open structure. The RuvB hexamer acts as an ATP-dependent pump, pulling dsDNA into and through the RuvAB complex. HJ branch migration allows RuvC to scan DNA until it finds its consensus sequence, where it cleaves and resolves the cruciform DNA. The sequence is that of Holliday junction branch migration complex subunit RuvA from Clostridium botulinum (strain Kyoto / Type A2).